Reading from the N-terminus, the 275-residue chain is Esterase AAEL000016 (275 aa).

Residues 1–21 form a disordered region; it reads MMANETAAKSTKSSPTPAVEP. The segment covering 7–16 has biased composition (polar residues); sequence AAKSTKSSPT. Catalysis depends on charge relay system residues Ser129, Asp187, and His214. The disordered stretch occupies residues 253–275; it reads LVDDSGPAGNGVHDDDDDDDDSD. Residues 266 to 275 are compositionally biased toward acidic residues; it reads DDDDDDDDSD.

It belongs to the LovG family.

This is Esterase AAEL000016 from Aedes aegypti (Yellowfever mosquito).